The primary structure comprises 476 residues: Deoxyguanosinetriphosphate triphosphohydrolase-like protein 2 (476 aa).

The segment at 1 to 20 is disordered; the sequence is MYTDADRSREVVPEKDGHDK. In terms of domain architecture, HD spans 60–233; that stretch reads RLTHSLEVAQ…MDLADDIAYS (174 aa).

It belongs to the dGTPase family. Type 2 subfamily.

The protein is Deoxyguanosinetriphosphate triphosphohydrolase-like protein 2 of Mesorhizobium japonicum (strain LMG 29417 / CECT 9101 / MAFF 303099) (Mesorhizobium loti (strain MAFF 303099)).